Here is a 607-residue protein sequence, read N- to C-terminus: Phosphomethylpyrimidine synthase (607 aa).

Residues asparagine 216, methionine 245, tyrosine 274, histidine 310, 330–332 (SRG), 371–374 (DGLR), and glutamate 410 contribute to the substrate site. Histidine 414 provides a ligand contact to Zn(2+). Residue tyrosine 437 coordinates substrate. Histidine 478 contacts Zn(2+). Residues cysteine 558, cysteine 561, and cysteine 566 each contribute to the [4Fe-4S] cluster site.

This sequence belongs to the ThiC family. In terms of assembly, homodimer. [4Fe-4S] cluster is required as a cofactor.

It catalyses the reaction 5-amino-1-(5-phospho-beta-D-ribosyl)imidazole + S-adenosyl-L-methionine = 4-amino-2-methyl-5-(phosphooxymethyl)pyrimidine + CO + 5'-deoxyadenosine + formate + L-methionine + 3 H(+). It functions in the pathway cofactor biosynthesis; thiamine diphosphate biosynthesis. Catalyzes the synthesis of the hydroxymethylpyrimidine phosphate (HMP-P) moiety of thiamine from aminoimidazole ribotide (AIR) in a radical S-adenosyl-L-methionine (SAM)-dependent reaction. The polypeptide is Phosphomethylpyrimidine synthase (Agrobacterium fabrum (strain C58 / ATCC 33970) (Agrobacterium tumefaciens (strain C58))).